A 150-amino-acid chain; its full sequence is Depactin (150 aa).

The region spanning S3–K148 is the ADF-H domain.

Belongs to the actin-binding proteins ADF family.

Depactin interacts with actin at some of its 12 N-terminal residues and 20 C-terminal residues. Binds to actin monomers from filaments and in solution. The protein is Depactin of Asterias amurensis (Northern Pacific seastar).